We begin with the raw amino-acid sequence, 199 residues long: N-(5'-phosphoribosyl)anthranilate isomerase (199 aa).

This sequence belongs to the TrpF family.

The catalysed reaction is N-(5-phospho-beta-D-ribosyl)anthranilate = 1-(2-carboxyphenylamino)-1-deoxy-D-ribulose 5-phosphate. Its pathway is amino-acid biosynthesis; L-tryptophan biosynthesis; L-tryptophan from chorismate: step 3/5. This Streptococcus pneumoniae serotype 4 (strain ATCC BAA-334 / TIGR4) protein is N-(5'-phosphoribosyl)anthranilate isomerase.